A 366-amino-acid polypeptide reads, in one-letter code: Histidinol-phosphate aminotransferase 2 (366 aa).

Positions 1 to 11 (MQVKDQLSSLQ) are enriched in polar residues. The tract at residues 1–21 (MQVKDQLSSLQPYKPGKSPEQ) is disordered. N6-(pyridoxal phosphate)lysine is present on lysine 222.

This sequence belongs to the class-II pyridoxal-phosphate-dependent aminotransferase family. Histidinol-phosphate aminotransferase subfamily. In terms of assembly, homodimer. Pyridoxal 5'-phosphate serves as cofactor.

It carries out the reaction L-histidinol phosphate + 2-oxoglutarate = 3-(imidazol-4-yl)-2-oxopropyl phosphate + L-glutamate. The protein operates within amino-acid biosynthesis; L-histidine biosynthesis; L-histidine from 5-phospho-alpha-D-ribose 1-diphosphate: step 7/9. In Bacillus anthracis, this protein is Histidinol-phosphate aminotransferase 2 (hisC2).